A 90-amino-acid polypeptide reads, in one-letter code: Interferon alpha-inducible protein 27-like protein 2A (90 aa).

Positions 1 to 24 (MLGTLFGSAIGGALAVAGAPVALA) are cleaved as a signal peptide. Helical transmembrane passes span 28 to 48 (FTGT…AAAI) and 67 to 89 (GVLG…VGAL).

This sequence belongs to the IFI6/IFI27 family. As to quaternary structure, homodimer. Interacts with SKP2. Interacts with NR4A1. May interact with BCL2.

The protein localises to the nucleus inner membrane. Functionally, may be involved in the interferon-induced negative regulation of the transcriptional activity of NR4A1, NR4A2 and NR4A3 through the enhancement of XPO1-mediated nuclear export of these nuclear receptors. Through the regulation of NR4A1 transcriptional activity, may play a role in the vascular response to injury. The polypeptide is Interferon alpha-inducible protein 27-like protein 2A (Mus musculus (Mouse)).